The sequence spans 299 residues: tRNA dimethylallyltransferase (299 aa).

13–20 (GPTASGKT) is a binding site for ATP. A substrate-binding site is contributed by 15-20 (TASGKT). The interval 38–41 (DSRQ) is interaction with substrate tRNA.

The protein belongs to the IPP transferase family. As to quaternary structure, monomer. Requires Mg(2+) as cofactor.

The enzyme catalyses adenosine(37) in tRNA + dimethylallyl diphosphate = N(6)-dimethylallyladenosine(37) in tRNA + diphosphate. In terms of biological role, catalyzes the transfer of a dimethylallyl group onto the adenine at position 37 in tRNAs that read codons beginning with uridine, leading to the formation of N6-(dimethylallyl)adenosine (i(6)A). This Prochlorococcus marinus (strain MIT 9211) protein is tRNA dimethylallyltransferase.